The sequence spans 232 residues: Octanoyltransferase (232 aa).

The BPL/LPL catalytic domain occupies 43–231 (DQTPNYFLFV…HFTQLFDCTV (189 aa)). Residues 88 to 95 (RGGDITYH), 160 to 162 (ALG), and 173 to 175 (GFA) each bind substrate. Cys191 (acyl-thioester intermediate) is an active-site residue.

It belongs to the LipB family.

Its subcellular location is the cytoplasm. It carries out the reaction octanoyl-[ACP] + L-lysyl-[protein] = N(6)-octanoyl-L-lysyl-[protein] + holo-[ACP] + H(+). It participates in protein modification; protein lipoylation via endogenous pathway; protein N(6)-(lipoyl)lysine from octanoyl-[acyl-carrier-protein]: step 1/2. Catalyzes the transfer of endogenously produced octanoic acid from octanoyl-acyl-carrier-protein onto the lipoyl domains of lipoate-dependent enzymes. Lipoyl-ACP can also act as a substrate although octanoyl-ACP is likely to be the physiological substrate. This is Octanoyltransferase from Flavobacterium psychrophilum (strain ATCC 49511 / DSM 21280 / CIP 103535 / JIP02/86).